The sequence spans 513 residues: ATP synthase subunit alpha (513 aa).

Glycine 171–threonine 178 provides a ligand contact to ATP.

This sequence belongs to the ATPase alpha/beta chains family. In terms of assembly, F-type ATPases have 2 components, CF(1) - the catalytic core - and CF(0) - the membrane proton channel. CF(1) has five subunits: alpha(3), beta(3), gamma(1), delta(1), epsilon(1). CF(0) has three main subunits: a(1), b(2) and c(9-12). The alpha and beta chains form an alternating ring which encloses part of the gamma chain. CF(1) is attached to CF(0) by a central stalk formed by the gamma and epsilon chains, while a peripheral stalk is formed by the delta and b chains.

The protein resides in the cell membrane. It carries out the reaction ATP + H2O + 4 H(+)(in) = ADP + phosphate + 5 H(+)(out). Its function is as follows. Produces ATP from ADP in the presence of a proton gradient across the membrane. The alpha chain is a regulatory subunit. This Wolbachia pipientis subsp. Culex pipiens (strain wPip) protein is ATP synthase subunit alpha.